The sequence spans 1138 residues: Nuclear pore complex-interacting protein family member B13 (1138 aa).

Residues 73–93 (VVITLWIVYLWVSLLKTIFWS) form a helical membrane-spanning segment. Disordered regions lie at residues 242-578 (RMGH…NIKT) and 747-1138 (ERLR…RRLS). The span at 252–263 (QQHSITDNSLSL) shows a compositional bias: polar residues. A compositionally biased stretch (pro residues) spans 349-359 (PLPPSAPPSAP). Composition is skewed to basic and acidic residues over residues 406-416 (DNIKTPAERLR), 448-458 (DNIKTPAERLR), 490-500 (DNIKTPAERLR), 532-542 (DNIKTPAERLR), 782-792 (DNIKTPAERLR), 824-834 (DNIKTPAERLR), 866-876 (DNIKTPAERLR), 908-918 (DNIKTPAERLR), 950-960 (DNIKTPAERLR), and 992-1002 (DNIKTPAERLR).

This sequence belongs to the NPIP family.

It localises to the membrane. The polypeptide is Nuclear pore complex-interacting protein family member B13 (Homo sapiens (Human)).